The primary structure comprises 145 residues: uncharacterized protein (145 aa).

A helical transmembrane segment spans residues 63–83; the sequence is FLCLPLFLSFLVANLILWLSF.

It is found in the mitochondrion membrane. This is an uncharacterized protein from Arabidopsis thaliana (Mouse-ear cress).